The sequence spans 67 residues: Prokaryotic ubiquitin-like protein Pup (67 aa).

Positions 1–36 (MPQQFEQPQAQQAATQEDDALATTQAAAQTESADQA) are disordered. Residues 23–61 (TTQAAAQTESADQADVLDDILDDIESTLETNAEEYVNSF) form an ARC ATPase binding region. Residue Glu67 forms an Isoglutamyl lysine isopeptide (Glu-Lys) (interchain with K-? in acceptor proteins) linkage.

Belongs to the prokaryotic ubiquitin-like protein family. As to quaternary structure, strongly interacts with the proteasome-associated ATPase ARC through a hydrophobic interface; the interacting region of Pup lies in its C-terminal half. There is one Pup binding site per ARC hexamer ring.

The protein operates within protein degradation; proteasomal Pup-dependent pathway. Functionally, protein modifier that is covalently attached to lysine residues of substrate proteins, thereby targeting them for proteasomal degradation. The tagging system is termed pupylation. The sequence is that of Prokaryotic ubiquitin-like protein Pup from Bifidobacterium longum (strain DJO10A).